The following is a 174-amino-acid chain: Ribosome maturation factor RimM (174 aa).

The PRC barrel domain maps to 99 to 172 (ADEFFYHDVI…RLVIRPIAGL (74 aa)).

It belongs to the RimM family. In terms of assembly, binds ribosomal protein uS19.

It is found in the cytoplasm. An accessory protein needed during the final step in the assembly of 30S ribosomal subunit, possibly for assembly of the head region. Essential for efficient processing of 16S rRNA. May be needed both before and after RbfA during the maturation of 16S rRNA. It has affinity for free ribosomal 30S subunits but not for 70S ribosomes. The chain is Ribosome maturation factor RimM from Chloroflexus aurantiacus (strain ATCC 29366 / DSM 635 / J-10-fl).